Consider the following 160-residue polypeptide: UPF0178 protein PSPA7_5991 (160 aa).

This sequence belongs to the UPF0178 family.

This is UPF0178 protein PSPA7_5991 from Pseudomonas paraeruginosa (strain DSM 24068 / PA7) (Pseudomonas aeruginosa (strain PA7)).